The chain runs to 269 residues: Formamidopyrimidine-DNA glycosylase (269 aa).

Pro-2 acts as the Schiff-base intermediate with DNA in catalysis. Catalysis depends on Glu-3, which acts as the Proton donor. Lys-57 acts as the Proton donor; for beta-elimination activity in catalysis. Positions 90, 109, and 150 each coordinate DNA. The segment at 235 to 269 (QVYGRKGEPCRVCGTPIVATKHAQRATFYCRHCQK) adopts an FPG-type zinc-finger fold. Arg-259 serves as the catalytic Proton donor; for delta-elimination activity.

The protein belongs to the FPG family. In terms of assembly, monomer. Zn(2+) is required as a cofactor.

It catalyses the reaction Hydrolysis of DNA containing ring-opened 7-methylguanine residues, releasing 2,6-diamino-4-hydroxy-5-(N-methyl)formamidopyrimidine.. The catalysed reaction is 2'-deoxyribonucleotide-(2'-deoxyribose 5'-phosphate)-2'-deoxyribonucleotide-DNA = a 3'-end 2'-deoxyribonucleotide-(2,3-dehydro-2,3-deoxyribose 5'-phosphate)-DNA + a 5'-end 5'-phospho-2'-deoxyribonucleoside-DNA + H(+). Involved in base excision repair of DNA damaged by oxidation or by mutagenic agents. Acts as a DNA glycosylase that recognizes and removes damaged bases. Has a preference for oxidized purines, such as 7,8-dihydro-8-oxoguanine (8-oxoG). Has AP (apurinic/apyrimidinic) lyase activity and introduces nicks in the DNA strand. Cleaves the DNA backbone by beta-delta elimination to generate a single-strand break at the site of the removed base with both 3'- and 5'-phosphates. The chain is Formamidopyrimidine-DNA glycosylase from Salmonella newport (strain SL254).